The chain runs to 181 residues: Oligoribonuclease (181 aa).

Residues L8 to L171 form the Exonuclease domain. Y129 is a catalytic residue.

Belongs to the oligoribonuclease family.

Its subcellular location is the cytoplasm. Functionally, 3'-to-5' exoribonuclease specific for small oligoribonucleotides. This is Oligoribonuclease from Nitrosomonas europaea (strain ATCC 19718 / CIP 103999 / KCTC 2705 / NBRC 14298).